We begin with the raw amino-acid sequence, 446 residues long: MTDTIFALATAAGRSAVAVVRVSGPRSSEIAAALCGRLPSPRLASVRTLKHNGVALDAALVLRFEKPASYTGEDSVEFHVHGGRAVVEALLAALSELGARLAEAGEFTRRAFENGKLDLAQAEGVADLIDAETEAQRRQALGQVGGALSQRYDRWRDLLVQALAMLEAAVDFPDEDLPEEVAERARPGLRQLSAELNAALADVSRGRRVRDGFRIALIGAPNAGKSTLLNGLAERDAAIVTDVAGTTRDVIEVPLVLGGYKVLVADTAGIRETADVIEAEGVRRAKAWAEAADLRLWVVDGFHVKQADARPEAIRVGDWLILNKTDIADADASAHVAERWAGEGLTVLHIAGTSAEGPEALRAALASHVADALSGAEFPAATRLRHAERLSEARSYLERALSDVGLEVELAAEDVRLAARALERISGRIDPEDVLGRVFSTFCIGK.

(6S)-5-formyl-5,6,7,8-tetrahydrofolate is bound by residues Arg21, Glu77, and Lys116. The TrmE-type G domain maps to 212–370; sequence GFRIALIGAP…LRAALASHVA (159 aa). Asn222 contacts K(+). Residues 222 to 227, 241 to 247, and 266 to 269 each bind GTP; these read NAGKST, TDVAGTT, and DTAG. Ser226 contacts Mg(2+). K(+) is bound by residues Thr241, Val243, and Thr246. Thr247 serves as a coordination point for Mg(2+). Position 446 (Lys446) interacts with (6S)-5-formyl-5,6,7,8-tetrahydrofolate.

It belongs to the TRAFAC class TrmE-Era-EngA-EngB-Septin-like GTPase superfamily. TrmE GTPase family. Homodimer. Heterotetramer of two MnmE and two MnmG subunits. K(+) is required as a cofactor.

Its subcellular location is the cytoplasm. Functionally, exhibits a very high intrinsic GTPase hydrolysis rate. Involved in the addition of a carboxymethylaminomethyl (cmnm) group at the wobble position (U34) of certain tRNAs, forming tRNA-cmnm(5)s(2)U34. The sequence is that of tRNA modification GTPase MnmE from Caulobacter vibrioides (strain ATCC 19089 / CIP 103742 / CB 15) (Caulobacter crescentus).